A 314-amino-acid chain; its full sequence is MLTFFIGDLLPIIVIMLLGYFSGRRETFSEDQARAFNKLVLNYALPAALFVSITRANREMIFADTRLTLVSLVVIVGCFFFSWFGCYKFFKRTHAEAAVCALIAGSPTIGFLGFAVLDPIYGDSVSTGLVVAIISIIVNAITIPIGLYLLNPSSGADGKKNSNLSALISAAKEPVVWAPVLATILVLVGVKIPAAWDPTFNLIAKANSGVAVFAAGLTLAAHKFEFSAEIAYNTFLKLILMPLALLLVGMACHLNSEHLQMMVLAGALPPAFSGIIIASRFNVYTRTGTASLAVSVLGFVVTAPLWIYVSRLVS.

The next 10 membrane-spanning stretches (helical) occupy residues 4 to 23 (FFIGDLLPIIVIMLLGYFSG), 36 to 53 (FNKLVLNYALPAALFVSI), 68 to 90 (TLVSLVVIVGCFFFSWFGCYKFF), 97 to 116 (AAVCALIAGSPTIGFLGFAV), 131 to 153 (VAIISIIVNAITIPIGLYLLNPS), 174 to 196 (PVVWAPVLATILVLVGVKIPAAW), 200 to 222 (FNLIAKANSGVAVFAAGLTLAAH), 229 to 251 (EIAYNTFLKLILMPLALLLVGMA), 261 to 283 (MMVLAGALPPAFSGIIIASRFNV), and 290 to 309 (ASLAVSVLGFVVTAPLWIYV).

The protein belongs to the auxin efflux carrier (TC 2.A.69) family.

The protein localises to the cell membrane. This is an uncharacterized protein from Escherichia coli O157:H7.